The following is a 146-amino-acid chain: Hemoglobin subunit beta (146 aa).

The 145-residue stretch at 2 to 146 (HWSAEEKQLI…VAHALARKYH (145 aa)) folds into the Globin domain. The heme b site is built by His63 and His92.

It belongs to the globin family. In terms of assembly, heterotetramer of two alpha chains and two beta chains. As to expression, red blood cells.

Involved in oxygen transport from the lung to the various peripheral tissues. In Streptopelia orientalis (Eastern turtle dove), this protein is Hemoglobin subunit beta (HBB).